We begin with the raw amino-acid sequence, 99 residues long: uncharacterized protein (99 aa).

Positions 1–17 are cleaved as a signal peptide; it reads MMMNSFFPAMALMVLVG. C18 carries the N-palmitoyl cysteine lipid modification. C18 is lipidated: S-diacylglycerol cysteine.

The protein resides in the cell membrane. This is an uncharacterized protein from Escherichia coli O157:H7.